A 352-amino-acid polypeptide reads, in one-letter code: Phosphoribosylformylglycinamidine cyclo-ligase (352 aa).

Belongs to the AIR synthase family.

It localises to the cytoplasm. It carries out the reaction 2-formamido-N(1)-(5-O-phospho-beta-D-ribosyl)acetamidine + ATP = 5-amino-1-(5-phospho-beta-D-ribosyl)imidazole + ADP + phosphate + H(+). The protein operates within purine metabolism; IMP biosynthesis via de novo pathway; 5-amino-1-(5-phospho-D-ribosyl)imidazole from N(2)-formyl-N(1)-(5-phospho-D-ribosyl)glycinamide: step 2/2. The protein is Phosphoribosylformylglycinamidine cyclo-ligase of Nitrosospira multiformis (strain ATCC 25196 / NCIMB 11849 / C 71).